The following is an 85-amino-acid chain: Protein RnfH (85 aa).

This sequence belongs to the UPF0125 (RnfH) family.

The protein is Protein RnfH of Cereibacter sphaeroides (strain ATCC 17023 / DSM 158 / JCM 6121 / CCUG 31486 / LMG 2827 / NBRC 12203 / NCIMB 8253 / ATH 2.4.1.) (Rhodobacter sphaeroides).